The primary structure comprises 460 residues: Flavin-containing monooxygenase FMO GS-OX-like 9 (460 aa).

20-25 is a binding site for FAD; it reads GAGPAG. 222–227 contributes to the NADP(+) binding site; sequence GNSMSG.

Belongs to the FMO family. FAD is required as a cofactor.

Catalyzes the conversion of methylthioalkyl glucosinolates of any chain length into methylsulfinylalkyl glucosinolates. The protein is Flavin-containing monooxygenase FMO GS-OX-like 9 of Arabidopsis thaliana (Mouse-ear cress).